Consider the following 65-residue polypeptide: uncharacterized protein (65 aa).

At 1-20 (MRFSNCFNKFKFCIGTEKKY) the chain is on the cytoplasmic side. Residues 21–43 (SFPICTSTYTSFSLFACIWSIFI) traverse the membrane as a helical segment. Topologically, residues 44-65 (HISLNKSFIYQKSWYYSFFQNR) are extracellular.

It localises to the host membrane. This is an uncharacterized protein from Acidianus sp. F28 (AFV-2).